Reading from the N-terminus, the 556-residue chain is 2-succinyl-5-enolpyruvyl-6-hydroxy-3-cyclohexene-1-carboxylate synthase (556 aa).

The protein belongs to the TPP enzyme family. MenD subfamily. In terms of assembly, homodimer. The cofactor is Mg(2+). Mn(2+) serves as cofactor. Requires thiamine diphosphate as cofactor.

It carries out the reaction isochorismate + 2-oxoglutarate + H(+) = 5-enolpyruvoyl-6-hydroxy-2-succinyl-cyclohex-3-ene-1-carboxylate + CO2. It functions in the pathway quinol/quinone metabolism; 1,4-dihydroxy-2-naphthoate biosynthesis; 1,4-dihydroxy-2-naphthoate from chorismate: step 2/7. Its pathway is quinol/quinone metabolism; menaquinone biosynthesis. Catalyzes the thiamine diphosphate-dependent decarboxylation of 2-oxoglutarate and the subsequent addition of the resulting succinic semialdehyde-thiamine pyrophosphate anion to isochorismate to yield 2-succinyl-5-enolpyruvyl-6-hydroxy-3-cyclohexene-1-carboxylate (SEPHCHC). The chain is 2-succinyl-5-enolpyruvyl-6-hydroxy-3-cyclohexene-1-carboxylate synthase from Shigella flexneri serotype 5b (strain 8401).